Here is a 355-residue protein sequence, read N- to C-terminus: 3-dehydroquinate synthase (355 aa).

Residues 67-72, 101-105, 125-126, Lys-138, Lys-147, and 165-168 each bind NAD(+); these read DGEIYK, GVIGD, TT, and FLNT. Zn(2+) is bound by residues Glu-180, His-243, and His-260.

The protein belongs to the sugar phosphate cyclases superfamily. Dehydroquinate synthase family. NAD(+) serves as cofactor. Requires Co(2+) as cofactor. It depends on Zn(2+) as a cofactor.

Its subcellular location is the cytoplasm. The catalysed reaction is 7-phospho-2-dehydro-3-deoxy-D-arabino-heptonate = 3-dehydroquinate + phosphate. Its pathway is metabolic intermediate biosynthesis; chorismate biosynthesis; chorismate from D-erythrose 4-phosphate and phosphoenolpyruvate: step 2/7. In terms of biological role, catalyzes the conversion of 3-deoxy-D-arabino-heptulosonate 7-phosphate (DAHP) to dehydroquinate (DHQ). This Buchnera aphidicola subsp. Baizongia pistaciae (strain Bp) protein is 3-dehydroquinate synthase.